A 411-amino-acid polypeptide reads, in one-letter code: Stearoyl-[acyl-carrier-protein] 9-desaturase 2, chloroplastic (411 aa).

A chloroplast-targeting transit peptide spans 1–44 (MALLLNSTITVAMKQNPLVAVSFPRTTCLGSSFSPPRLLRVSCV). 6 residues coordinate Fe cation: E148, E186, H189, E239, E272, and H275.

The protein belongs to the fatty acid desaturase type 2 family. As to quaternary structure, homodimer. The cofactor is Fe(2+). As to expression, preferentially expressed in roots and flowers.

Its subcellular location is the plastid. The protein localises to the chloroplast. It carries out the reaction octadecanoyl-[ACP] + 2 reduced [2Fe-2S]-[ferredoxin] + O2 + 2 H(+) = (9Z)-octadecenoyl-[ACP] + 2 oxidized [2Fe-2S]-[ferredoxin] + 2 H2O. It participates in lipid metabolism; fatty acid metabolism. Its function is as follows. Converts stearoyl-ACP to oleoyl-ACP by introduction of a cis double bond between carbons 9 and 10 of the acyl chain. Exhibits delta-9 palmitoyl-[acyl-carrier-protein] desaturase (PAD) activity. Involved in omega-7 monounsaturated fatty acid biosynthesis, especially in the endosperm oil. This is Stearoyl-[acyl-carrier-protein] 9-desaturase 2, chloroplastic (S-ACP-DES2) from Arabidopsis thaliana (Mouse-ear cress).